The sequence spans 227 residues: Enolase-phosphatase E1 (227 aa).

This sequence belongs to the HAD-like hydrolase superfamily. MasA/MtnC family. Monomer. Requires Mg(2+) as cofactor.

It carries out the reaction 5-methylsulfanyl-2,3-dioxopentyl phosphate + H2O = 1,2-dihydroxy-5-(methylsulfanyl)pent-1-en-3-one + phosphate. Its pathway is amino-acid biosynthesis; L-methionine biosynthesis via salvage pathway; L-methionine from S-methyl-5-thio-alpha-D-ribose 1-phosphate: step 3/6. It functions in the pathway amino-acid biosynthesis; L-methionine biosynthesis via salvage pathway; L-methionine from S-methyl-5-thio-alpha-D-ribose 1-phosphate: step 4/6. In terms of biological role, bifunctional enzyme that catalyzes the enolization of 2,3-diketo-5-methylthiopentyl-1-phosphate (DK-MTP-1-P) into the intermediate 2-hydroxy-3-keto-5-methylthiopentenyl-1-phosphate (HK-MTPenyl-1-P), which is then dephosphorylated to form the acireductone 1,2-dihydroxy-3-keto-5-methylthiopentene (DHK-MTPene). In Pseudomonas fluorescens (strain Pf0-1), this protein is Enolase-phosphatase E1.